Reading from the N-terminus, the 193-residue chain is Interleukin-18-binding protein (193 aa).

An N-terminal signal peptide occupies residues 1-28; the sequence is MTMRHCWTAGPSSWWVLLLYVHVILARA. Residues 60 to 161 enclose the Ig-like C2-type domain; sequence PALDVIWPEK…QVAQYHIILA (102 aa). N-linked (GlcNAc...) asparagine glycans are attached at residues Asn-74, Asn-98, Asn-120, and Asn-142. Residues Cys-81 and Cys-145 are joined by a disulfide bond. Positions 172–185 are enriched in polar residues; it reads SPSQETLSSHSPVS. Residues 172–193 are disordered; the sequence is SPSQETLSSHSPVSRSAGPGVA.

The protein resides in the secreted. Its function is as follows. Binds to IL-18 and inhibits its activity. Functions as an inhibitor of the early TH1 cytokine response. The sequence is that of Interleukin-18-binding protein (Il18bp) from Mus musculus (Mouse).